Reading from the N-terminus, the 171-residue chain is Deoxyuridine 5'-triphosphate nucleotidohydrolase (171 aa).

Glu-143 provides a ligand contact to Mg(2+).

It belongs to the dUTPase family. In terms of assembly, homotrimer. Mg(2+) is required as a cofactor.

The catalysed reaction is dUTP + H2O = dUMP + diphosphate + H(+). The protein operates within pyrimidine metabolism; dUMP biosynthesis; dUMP from dCTP (dUTP route): step 2/2. Its function is as follows. This enzyme is involved in nucleotide metabolism: it produces dUMP, the immediate precursor of thymidine nucleotides and it decreases the intracellular concentration of dUTP, preventing uracil incorporation into DNA. The chain is Deoxyuridine 5'-triphosphate nucleotidohydrolase (DUT) from Oryza sativa subsp. japonica (Rice).